A 733-amino-acid chain; its full sequence is Phosphoribosylformylglycinamidine synthase subunit PurL (733 aa).

The active site involves His32. Tyr35 is a binding site for ATP. Position 81 (Glu81) interacts with Mg(2+). Residues 82–85 and Arg104 each bind substrate; that span reads SHNH. The active-site Proton acceptor is the His83. Asp105 contacts Mg(2+). Residue Gln230 coordinates substrate. Asp258 is a binding site for Mg(2+). Position 301–303 (301–303) interacts with substrate; that stretch reads ESQ. ATP contacts are provided by Asp482 and Gly519. Position 520 (Asn520) interacts with Mg(2+). Ser522 contributes to the substrate binding site.

It belongs to the FGAMS family. As to quaternary structure, monomer. Part of the FGAM synthase complex composed of 1 PurL, 1 PurQ and 2 PurS subunits.

It localises to the cytoplasm. The enzyme catalyses N(2)-formyl-N(1)-(5-phospho-beta-D-ribosyl)glycinamide + L-glutamine + ATP + H2O = 2-formamido-N(1)-(5-O-phospho-beta-D-ribosyl)acetamidine + L-glutamate + ADP + phosphate + H(+). It functions in the pathway purine metabolism; IMP biosynthesis via de novo pathway; 5-amino-1-(5-phospho-D-ribosyl)imidazole from N(2)-formyl-N(1)-(5-phospho-D-ribosyl)glycinamide: step 1/2. In terms of biological role, part of the phosphoribosylformylglycinamidine synthase complex involved in the purines biosynthetic pathway. Catalyzes the ATP-dependent conversion of formylglycinamide ribonucleotide (FGAR) and glutamine to yield formylglycinamidine ribonucleotide (FGAM) and glutamate. The FGAM synthase complex is composed of three subunits. PurQ produces an ammonia molecule by converting glutamine to glutamate. PurL transfers the ammonia molecule to FGAR to form FGAM in an ATP-dependent manner. PurS interacts with PurQ and PurL and is thought to assist in the transfer of the ammonia molecule from PurQ to PurL. This Methanocaldococcus jannaschii (strain ATCC 43067 / DSM 2661 / JAL-1 / JCM 10045 / NBRC 100440) (Methanococcus jannaschii) protein is Phosphoribosylformylglycinamidine synthase subunit PurL.